We begin with the raw amino-acid sequence, 258 residues long: Hydroxyacylglutathione hydrolase (258 aa).

Zn(2+) contacts are provided by H55, H57, D59, H60, H115, D132, and H170.

Belongs to the metallo-beta-lactamase superfamily. Glyoxalase II family. As to quaternary structure, monomer. Zn(2+) serves as cofactor.

The catalysed reaction is an S-(2-hydroxyacyl)glutathione + H2O = a 2-hydroxy carboxylate + glutathione + H(+). Its pathway is secondary metabolite metabolism; methylglyoxal degradation; (R)-lactate from methylglyoxal: step 2/2. Its function is as follows. Thiolesterase that catalyzes the hydrolysis of S-D-lactoyl-glutathione to form glutathione and D-lactic acid. The sequence is that of Hydroxyacylglutathione hydrolase from Shewanella denitrificans (strain OS217 / ATCC BAA-1090 / DSM 15013).